A 368-amino-acid polypeptide reads, in one-letter code: L-arabinitol 4-dehydrogenase (368 aa).

Residues C52, H77, E78, C107, C110, C113, C121, and E162 each contribute to the Zn(2+) site. NAD(+) contacts are provided by D210, R215, and I282.

It belongs to the zinc-containing alcohol dehydrogenase family. As to quaternary structure, homotetramer. The cofactor is Zn(2+).

The catalysed reaction is L-arabinitol + NAD(+) = L-xylulose + NADH + H(+). Its function is as follows. Plays a key role in liamocins biosynthesis by providing the arabinol moity that is linked to 3,5-dihydroxydecanoic acid (provided by the HR-PKS PKS1) via ester bond formation catalyzed by the esterase EST1. In Aureobasidium melanogenum (Aureobasidium pullulans var. melanogenum), this protein is L-arabinitol 4-dehydrogenase.